The sequence spans 502 residues: Cobyric acid synthase (502 aa).

A GATase cobBQ-type domain is found at 260–433 (ILRVAVCAIP…WHGSLESDGF (174 aa)). Cysteine 341 functions as the Nucleophile in the catalytic mechanism. The active site involves histidine 425.

The protein belongs to the CobB/CobQ family. CobQ subfamily.

It participates in cofactor biosynthesis; adenosylcobalamin biosynthesis. Its function is as follows. Catalyzes amidations at positions B, D, E, and G on adenosylcobyrinic A,C-diamide. NH(2) groups are provided by glutamine, and one molecule of ATP is hydrogenolyzed for each amidation. The protein is Cobyric acid synthase of Streptomyces avermitilis (strain ATCC 31267 / DSM 46492 / JCM 5070 / NBRC 14893 / NCIMB 12804 / NRRL 8165 / MA-4680).